The chain runs to 219 residues: Redox-sensing transcriptional repressor Rex (219 aa).

A DNA-binding region (H-T-H motif) is located at residues 18–57; the sequence is LYYRFIQSLYNSGKLRVSSAELSEAVKVDSATIRRDFSYF. 92–97 serves as a coordination point for NAD(+); that stretch reads GVGHLG.

Belongs to the transcriptional regulatory Rex family. As to quaternary structure, homodimer.

Its subcellular location is the cytoplasm. Its function is as follows. Modulates transcription in response to changes in cellular NADH/NAD(+) redox state. The chain is Redox-sensing transcriptional repressor Rex from Exiguobacterium sibiricum (strain DSM 17290 / CCUG 55495 / CIP 109462 / JCM 13490 / 255-15).